We begin with the raw amino-acid sequence, 1988 residues long: Sodium channel protein type 9 subunit alpha (1988 aa).

Residues 1-125 are Cytoplasmic-facing; it reads MAMLPPPGPQ…RRISIKILVH (125 aa). Basic and acidic residues predominate over residues 26 to 39; it reads RIAERKSKEPKEEK. The tract at residues 26–55 is disordered; that stretch reads RIAERKSKEPKEEKKDDDEEAPKPSSDLEA. An I repeat occupies 112–410; sequence FSPLRRISIK…VAMAYEEQNQ (299 aa). The helical transmembrane segment at 126-145 threads the bilayer; sequence SLFSMLIMCTILTNCIFMTM. The Extracellular portion of the chain corresponds to 146–150; sequence NNPPD. A helical transmembrane segment spans residues 151-172; that stretch reads WTKNVEYTFTGIYTFESLVKIL. Residues 173–185 lie on the Cytoplasmic side of the membrane; the sequence is ARGFCVGEFTFLR. The helical transmembrane segment at 186–204 threads the bilayer; the sequence is DPWNWLDFVVIVFAYLTEF. Residues 205–210 are Extracellular-facing; it reads VNLGNV. Asn-209 carries an N-linked (GlcNAc...) asparagine glycan. A helical transmembrane segment spans residues 211–227; it reads SALRTFRVLRALKTISV. Over 228–241 the chain is Cytoplasmic; sequence IPGLKTIVGALIQS. A helical membrane pass occupies residues 242 to 267; the sequence is VKKLSDVMILTVFCLSVFALIGLQLF. Residues 268-346 lie on the Extracellular side of the membrane; sequence MGNLKHKCFR…PDYGYTSFDT (79 aa). Cys-275 and Cys-324 are oxidised to a cystine. Asn-283 carries an N-linked (GlcNAc...) asparagine glycan. Residues 347 to 363 constitute an intramembrane region (pore-forming); sequence FSWAFLALFRLMTQDYW. Residues 364–376 lie on the Extracellular side of the membrane; the sequence is ENLYQQTLRAAGK. A helical transmembrane segment spans residues 377-402; the sequence is TYMIFFVVVIFLGSFYLINLILAVVA. Residues 403 to 745 are Cytoplasmic-facing; that stretch reads MAYEEQNQAN…CIYFIVMDPF (343 aa). Positions 461-471 are enriched in low complexity; the sequence is SSSETSKLSSK. Disordered stretches follow at residues 461–543 and 565–611; these read SSSE…RGSL and GSET…SPPM. The segment covering 474 to 486 has biased composition (basic residues); it reads KERRNRRKKKNQK. 2 stretches are compositionally biased toward basic and acidic residues: residues 489–510 and 573–585; these read SSGEEKGDAEKLSKSESEDSIR and DEHSIFGDNESRR. The II repeat unit spans residues 726–989; sequence CSPYWIKFKK…EEDPDANNLQ (264 aa). A helical membrane pass occupies residues 746 to 762; the sequence is VDLAITICIVLNTLFMA. The Extracellular portion of the chain corresponds to 763-771; it reads MEHHPMTEE. Residues 772–796 form a helical membrane-spanning segment; that stretch reads FKNVLAIGNLVFTGIFAAEMVLKLI. Residues 797–805 are Cytoplasmic-facing; sequence AMDPYEYFQ. Residues 806 to 822 traverse the membrane as a helical segment; sequence VGWNIFDSLIVTLSLVE. The Extracellular segment spans residues 823–831; the sequence is LFLADVEGL. A helical transmembrane segment spans residues 832–848; it reads SVLRSFRLLRVFKLAKS. At 849 to 865 the chain is on the cytoplasmic side; it reads WPTLNMLIKIIGNSVGA. A helical transmembrane segment spans residues 866 to 888; the sequence is LGNLTLVLAIIVFIFAVVGMQLF. Topologically, residues 889 to 915 are extracellular; sequence GKSYKECVCKINDDCTLPRWHMNDFFH. Residues Cys-897 and Cys-903 are joined by a disulfide bond. Positions 916–928 form an intramembrane region, pore-forming; it reads SFLIVFRVLCGEW. At 929 to 940 the chain is on the extracellular side; the sequence is IETMWDCMEVAG. The cysteines at positions 935 and 944 are disulfide-linked. The chain crosses the membrane as a helical span at residues 941–967; sequence QAMCLIVYMMVMVIGNLVVLNLFLALL. The Cytoplasmic portion of the chain corresponds to 968–1187; that stretch reads LSSFSSDNLT…WWNIRKTCYK (220 aa). Residues 1102 to 1148 form a disordered region; it reads NAEELSSDSDSEYSKVRLNRSSSSECSTVDNPLPGEGEEAEAEPMNS. The span at 1120–1131 shows a compositional bias: polar residues; sequence NRSSSSECSTVD. The span at 1137 to 1148 shows a compositional bias: acidic residues; that stretch reads EGEEAEAEPMNS. The stretch at 1180 to 1488 is one III repeat; sequence NIRKTCYKIV…KKYYNAMKKL (309 aa). A helical transmembrane segment spans residues 1188 to 1212; that stretch reads IVEHSWFESFIVLMILLSSGALAFE. Residues 1213-1224 lie on the Extracellular side of the membrane; the sequence is DIYIERKKTIKI. A helical transmembrane segment spans residues 1225–1250; that stretch reads ILEYADKIFTYIFILEMLLKWIAYGY. The Cytoplasmic portion of the chain corresponds to 1251 to 1252; sequence KT. A helical transmembrane segment spans residues 1253–1278; sequence YFTNAWCWLDFLIVDVSLVTLVANTL. Topologically, residues 1279–1287 are extracellular; the sequence is GYSDLGPIK. The chain crosses the membrane as a helical span at residues 1288 to 1304; sequence SLRTLRALRPLRALSRF. Over 1305–1317 the chain is Cytoplasmic; sequence EGMRVVVNALIGA. Residues 1318-1342 form a helical membrane-spanning segment; it reads IPSIMNVLLVCLIFWLIFSIMGVNL. Residues 1343–1394 lie on the Extracellular side of the membrane; sequence FAGKFYECINTTDGSRFPASQVPNRSECFALMNVSQNVRWKNLKVNFDNVGL. Cys-1350 and Cys-1370 are joined by a disulfide. Asn-1352, Asn-1366, and Asn-1375 each carry an N-linked (GlcNAc...) asparagine glycan. Positions 1395–1405 form an intramembrane region, pore-forming; that stretch reads GYLSLLQVATF. Topologically, residues 1406-1431 are extracellular; that stretch reads KGWTIIMYAAVDSVNVDKQPKYEYSL. The helical transmembrane segment at 1432–1457 threads the bilayer; it reads YMYIYFVVFIIFGSFFTLNLFIGVII. Residues 1458–1514 lie on the Cytoplasmic side of the membrane; it reads DNFNQQKKKLGGQDIFMTEEQKKYYNAMKKLGSKKPQKPIPRPGNKIQGCIFDLVTN. Ser-1490 is modified (phosphoserine; by PKC). Residues 1497–1795 form an IV repeat; sequence IPRPGNKIQG…WEKFDPDATQ (299 aa). The helical transmembrane segment at 1515–1534 threads the bilayer; sequence QAFDISIMVLICLNMVTMMV. Over 1535 to 1545 the chain is Extracellular; that stretch reads EKEGQSQHMTE. The chain crosses the membrane as a helical span at residues 1546 to 1567; the sequence is VLYWINVVFIILFTGECVLKLI. At 1568–1576 the chain is on the cytoplasmic side; it reads SLRHYYFTV. The helical transmembrane segment at 1577 to 1598 threads the bilayer; sequence GWNIFDFVVVIISIVGMFLADL. The Extracellular portion of the chain corresponds to 1599 to 1607; it reads IETYFVSPT. Residues 1608 to 1627 traverse the membrane as a helical segment; it reads LFRVIRLARIGRILRLVKGA. Topologically, residues 1628–1640 are cytoplasmic; that stretch reads KGIRTLLFALMMS. A helical transmembrane segment spans residues 1641 to 1663; the sequence is LPALFNIGLLLFLVMFIYAIFGM. The Extracellular portion of the chain corresponds to 1664–1686; it reads SNFAYVKKEDGINDMFNFETFGN. Residues 1687–1699 constitute an intramembrane region (pore-forming); sequence SMICLFQITTSAG. The Extracellular portion of the chain corresponds to 1700 to 1733; that stretch reads WDGLLAPILNSKPPDCDPKKVHPGSSVEGDCGNP. The cysteines at positions 1715 and 1730 are disulfide-linked. A helical membrane pass occupies residues 1734 to 1759; sequence SVGIFYFVSYIIISFLVVVNMYIAVI. Topologically, residues 1760–1988 are cytoplasmic; sequence LENFSVATEE…KGKDSKESKK (229 aa). The 30-residue stretch at 1889-1918 folds into the IQ domain; the sequence is EDVSATVIQRAYRRYRLRQNVKNISSIYIK. Residues 1934–1988 form a disordered region; the sequence is FDNVNENSSPEKTDATSSTTSPPSYDSVTKPDKEKYEQDRTEKEDKGKDSKESKK. The span at 1948–1961 shows a compositional bias: low complexity; that stretch reads ATSSTTSPPSYDSV. The segment covering 1962–1988 has biased composition (basic and acidic residues); sequence TKPDKEKYEQDRTEKEDKGKDSKESKK.

Belongs to the sodium channel (TC 1.A.1.10) family. Nav1.7/SCN9A subfamily. The Nav1.7 voltage-gated sodium channel consists of an ion-conducting alpha subunit SCN9A which is functional on its own regulated by one or more beta-1 (SCN1B), beta-2 (SCN2B), beta-3 (SCN3B) and beta-4 (SCN4B) subunits. SCN1B and SCN3B are non-covalently associated with SCN9A. SCN2B and SCN4B are disulfide-linked to SCN9A. SCN1B regulates channel inactivation. Interacts with NEDD4 and NEDD4L; regulates Nav1.7 activity most probably through ubiquitination and subsequent endocytosis. Interacts with TMEM233; modulates the gating properties of NaV1.7. Phosphorylation at Ser-1490 by PKC in a highly conserved cytoplasmic loop increases peak sodium currents. Post-translationally, ubiquitinated by NEDD4L; which may promote its endocytosis. In terms of tissue distribution, expressed strongly in dorsal root ganglion, with only minor levels elsewhere in the body, smooth muscle cells, MTC cell line and C-cell carcinoma. Also expressed in vagus nerves within the head and neck region. Isoform 1 is expressed preferentially in the central and peripheral nervous system. Isoform 2 is expressed preferentially in the dorsal root ganglion.

The protein localises to the cell membrane. It is found in the cell projection. Its subcellular location is the neuron projection. It localises to the axon. It catalyses the reaction Na(+)(in) = Na(+)(out). Inhibited by tetrodotoxin. Weakly inhibited by saxitoxin. Inhibited by the spider huwentoxin-IV that binds the extracellular loop S3-S4 of repeat II. Inhibited by the spider protoxin-II that binds the extracellular loop S3-S4 of repeats II and IV. Inhibited by the scorpion alpha-toxins CvIV4 and AaH2. Inhibited by the conotoxin GVIIJ. Inhibited by the spider beta/delta-theraphotoxin-Pre1a. Functionally, pore-forming subunit of Nav1.7, a voltage-gated sodium (Nav) channel that directly mediates the depolarizing phase of action potentials in excitable membranes. Navs, also called VGSCs (voltage-gated sodium channels) or VDSCs (voltage-dependent sodium channels), operate by switching between closed and open conformations depending on the voltage difference across the membrane. In the open conformation they allow Na(+) ions to selectively pass through the pore, along their electrochemical gradient. The influx of Na(+) ions provokes membrane depolarization, initiating the propagation of electrical signals throughout cells and tissues. Nav1.7 plays a crucial role in controlling the excitability and action potential propagation from nociceptor neurons, thereby contributing to the sensory perception of pain. The protein is Sodium channel protein type 9 subunit alpha of Homo sapiens (Human).